The chain runs to 434 residues: Glutamyl-tRNA reductase (434 aa).

Substrate-binding positions include 49 to 52 (TCNR), S109, 114 to 116 (EPQ), and Q120. The active-site Nucleophile is C50. 189-194 (GAGEMC) is an NADP(+) binding site.

The protein belongs to the glutamyl-tRNA reductase family. In terms of assembly, homodimer.

It carries out the reaction (S)-4-amino-5-oxopentanoate + tRNA(Glu) + NADP(+) = L-glutamyl-tRNA(Glu) + NADPH + H(+). Its pathway is porphyrin-containing compound metabolism; protoporphyrin-IX biosynthesis; 5-aminolevulinate from L-glutamyl-tRNA(Glu): step 1/2. Functionally, catalyzes the NADPH-dependent reduction of glutamyl-tRNA(Glu) to glutamate 1-semialdehyde (GSA). This Geotalea uraniireducens (strain Rf4) (Geobacter uraniireducens) protein is Glutamyl-tRNA reductase.